Here is a 291-residue protein sequence, read N- to C-terminus: MDLFSPAKLNLFLKLHGKTSHGFHEMTTLYQVIDFGDRLSLESSSEDSLICNLPELNTPQNLIWKSIQVFRDYTQIYSPVAWRLYKCIPIGSGIGGGSSNAATALYALNQHFQTQLSNDVLQELGKKIGMDVPLFFSLGSALGIGCGEEILSYDNDHRDERYVLYFSDQPVLTKDAFSYVRPEDFSKREECLSLYARNNDLEQSVFRFRKDLEEKKHMLKRIWSPFNAHVRMSGAGATLFVSYSREIETDPSTAKALHATIHNSQGLLVNSLRKYNGWFEHGDNLLATTRQ.

The active site involves K8. An ATP-binding site is contributed by 89-99 (PIGSGIGGGSS). D131 is an active-site residue.

Belongs to the GHMP kinase family. IspE subfamily.

The catalysed reaction is 4-CDP-2-C-methyl-D-erythritol + ATP = 4-CDP-2-C-methyl-D-erythritol 2-phosphate + ADP + H(+). It functions in the pathway isoprenoid biosynthesis; isopentenyl diphosphate biosynthesis via DXP pathway; isopentenyl diphosphate from 1-deoxy-D-xylulose 5-phosphate: step 3/6. In terms of biological role, catalyzes the phosphorylation of the position 2 hydroxy group of 4-diphosphocytidyl-2C-methyl-D-erythritol. This is 4-diphosphocytidyl-2-C-methyl-D-erythritol kinase from Chlamydia abortus (strain DSM 27085 / S26/3) (Chlamydophila abortus).